Consider the following 318-residue polypeptide: Methionyl-tRNA formyltransferase (318 aa).

(6S)-5,6,7,8-tetrahydrofolate is bound at residue 112–115; that stretch reads SILP.

It belongs to the Fmt family.

The enzyme catalyses L-methionyl-tRNA(fMet) + (6R)-10-formyltetrahydrofolate = N-formyl-L-methionyl-tRNA(fMet) + (6S)-5,6,7,8-tetrahydrofolate + H(+). In terms of biological role, attaches a formyl group to the free amino group of methionyl-tRNA(fMet). The formyl group appears to play a dual role in the initiator identity of N-formylmethionyl-tRNA by promoting its recognition by IF2 and preventing the misappropriation of this tRNA by the elongation apparatus. This is Methionyl-tRNA formyltransferase from Shewanella sp. (strain MR-4).